An 83-amino-acid chain; its full sequence is uncharacterized protein (83 aa).

Helical transmembrane passes span 23–43 and 56–76; these read FSLWFTHITFIGLFLMFQLIK and TIFVVTCIIAILLWIIYCVFL.

It is found in the cell membrane. This is an uncharacterized protein from Bacillus subtilis (strain 168).